The primary structure comprises 253 residues: uncharacterized protein (253 aa).

The disordered stretch occupies residues 211–235 (DEPEPAQPTLTVPSAQPVSNRRGKP). The segment covering 218 to 229 (PTLTVPSAQPVS) has biased composition (polar residues).

This is an uncharacterized protein from Mycobacterium tuberculosis (strain CDC 1551 / Oshkosh).